Consider the following 196-residue polypeptide: Pycsar effector protein GmPycTM (196 aa).

The next 3 helical transmembrane spans lie at 34-54 (ISFS…SGII), 82-102 (ITTI…TYLF), and 176-196 (VNWL…FLFL).

Its subcellular location is the cell inner membrane. In terms of biological role, pycsar (pyrimidine cyclase system for antiphage resistance) provides immunity against bacteriophage. The pyrimidine cyclase (PycC) synthesizes cyclic nucleotides in response to infection; these serve as specific second messenger signals. The signals activate the adjacent effector, leading to bacterial cell death and abortive phage infection. A clade C Pycsar system. Its function is as follows. The effector gene of a two-gene Pycsar system. Expression of this and adjacent uridylate cyclase GmPycC (AC P0DV42) probably confers resistance to bacteriophage. The genes are probably only expressed in response to bacteriophage infection. Probably only responds to cUMP (produced by its cognate NTP cyclase), acts by impairing membrane integrity. In Gulbenkiania mobilis, this protein is Pycsar effector protein GmPycTM.